Consider the following 199-residue polypeptide: Probable GTP-binding protein EngB (199 aa).

In terms of domain architecture, EngB-type G spans 28–199 (DLPEIALAGR…DSWDAILEQV (172 aa)). GTP contacts are provided by residues 36 to 43 (GRSNVGKS), 63 to 67 (GKTQL), 81 to 84 (DVPG), 148 to 151 (TKAD), and 180 to 182 (FSS). Mg(2+) contacts are provided by Ser43 and Thr65.

It belongs to the TRAFAC class TrmE-Era-EngA-EngB-Septin-like GTPase superfamily. EngB GTPase family. It depends on Mg(2+) as a cofactor.

Necessary for normal cell division and for the maintenance of normal septation. This Streptococcus pyogenes serotype M18 (strain MGAS8232) protein is Probable GTP-binding protein EngB.